The sequence spans 148 residues: Holo-[acyl-carrier-protein] synthase (148 aa).

Mg(2+) is bound by residues aspartate 9 and glutamate 63.

It belongs to the P-Pant transferase superfamily. AcpS family. It depends on Mg(2+) as a cofactor.

It is found in the cytoplasm. The enzyme catalyses apo-[ACP] + CoA = holo-[ACP] + adenosine 3',5'-bisphosphate + H(+). Functionally, transfers the 4'-phosphopantetheine moiety from coenzyme A to a Ser of acyl-carrier-protein. The polypeptide is Holo-[acyl-carrier-protein] synthase (Burkholderia cenocepacia (strain HI2424)).